A 72-amino-acid polypeptide reads, in one-letter code: Translation initiation factor IF-1 (72 aa).

An S1-like domain is found at 1–72 (MSKNDVIEVE…TRGRIVYRFK (72 aa)).

It belongs to the IF-1 family. As to quaternary structure, component of the 30S ribosomal translation pre-initiation complex which assembles on the 30S ribosome in the order IF-2 and IF-3, IF-1 and N-formylmethionyl-tRNA(fMet); mRNA recruitment can occur at any time during PIC assembly.

The protein resides in the cytoplasm. One of the essential components for the initiation of protein synthesis. Stabilizes the binding of IF-2 and IF-3 on the 30S subunit to which N-formylmethionyl-tRNA(fMet) subsequently binds. Helps modulate mRNA selection, yielding the 30S pre-initiation complex (PIC). Upon addition of the 50S ribosomal subunit IF-1, IF-2 and IF-3 are released leaving the mature 70S translation initiation complex. This chain is Translation initiation factor IF-1, found in Desulforamulus reducens (strain ATCC BAA-1160 / DSM 100696 / MI-1) (Desulfotomaculum reducens).